The primary structure comprises 493 residues: 3-octaprenyl-4-hydroxybenzoate carboxy-lyase (493 aa).

Position 172 (Asn172) interacts with Mn(2+). Prenylated FMN-binding positions include 175 to 177 (IYR), 189 to 191 (RWL), and 194 to 195 (RG). Glu238 contacts Mn(2+). The active-site Proton donor is the Asp287.

Belongs to the UbiD family. As to quaternary structure, homohexamer. Prenylated FMN serves as cofactor. Mn(2+) is required as a cofactor.

It localises to the cell membrane. The enzyme catalyses a 4-hydroxy-3-(all-trans-polyprenyl)benzoate + H(+) = a 2-(all-trans-polyprenyl)phenol + CO2. It participates in cofactor biosynthesis; ubiquinone biosynthesis. Its function is as follows. Catalyzes the decarboxylation of 3-octaprenyl-4-hydroxy benzoate to 2-octaprenylphenol, an intermediate step in ubiquinone biosynthesis. This Shewanella loihica (strain ATCC BAA-1088 / PV-4) protein is 3-octaprenyl-4-hydroxybenzoate carboxy-lyase.